The following is a 235-amino-acid chain: Proteasome subunit alpha type-2 (235 aa).

It belongs to the peptidase T1A family. The 26S proteasome consists of a 20S proteasome core and two 19S regulatory subunits. The 20S proteasome core is composed of 28 subunits that are arranged in four stacked rings, resulting in a barrel-shaped structure. The two end rings are each formed by seven alpha subunits, and the two central rings are each formed by seven beta subunits. The catalytic chamber with the active sites is on the inside of the barrel.

Its subcellular location is the cytoplasm. The protein resides in the nucleus. Functionally, the proteasome is a multicatalytic proteinase complex which is characterized by its ability to cleave peptides with Arg, Phe, Tyr, Leu, and Glu adjacent to the leaving group at neutral or slightly basic pH. The proteasome has an ATP-dependent proteolytic activity. This chain is Proteasome subunit alpha type-2 (PAB1), found in Oryza sativa subsp. indica (Rice).